The chain runs to 392 residues: Cellobiose 2-epimerase (392 aa).

Belongs to the cellobiose 2-epimerase family.

The catalysed reaction is D-cellobiose = beta-D-glucosyl-(1-&gt;4)-D-mannopyranose. Its function is as follows. Catalyzes the reversible epimerization of cellobiose to 4-O-beta-D-glucopyranosyl-D-mannose (Glc-Man). Can also epimerize cellotriose to Glc-Glc-Man, cellotetraose to Glc-Glc-Glc-Man, lactose to epilactose, and mannobiose to 4-O-beta-D-mannopyranosyl-D-glucopyranose (Man-Glc). May function as a mannobiose 2-epimerase in vivo and be involved in a mannan catabolic pathway which feeds into glycolysis. The protein is Cellobiose 2-epimerase (bfce) of Bacteroides fragilis (strain ATCC 25285 / DSM 2151 / CCUG 4856 / JCM 11019 / LMG 10263 / NCTC 9343 / Onslow / VPI 2553 / EN-2).